Here is a 1033-residue protein sequence, read N- to C-terminus: E3 ubiquitin-protein ligase Topors (1033 aa).

Residues 1-10 (MGSQPPPPGS) are compositionally biased toward pro residues. Residues 1 to 36 (MGSQPPPPGSPLSREEGEAPPLVPAEEGRRRSRRVR) are disordered. A required for DNA-binding region spans residues 52 to 376 (ELASNGPAVP…MAAFDQHANY (325 aa)). Residues lysine 74, lysine 77, lysine 84, and lysine 89 each participate in a glycyl lysine isopeptide (Lys-Gly) (interchain with G-Cter in SUMO2) cross-link. Residue serine 99 is modified to Phosphoserine. Residues 104–143 (CPICLDRFDNVSYLDRCLHKFCFRCVQEWSKNKAECPLCK) form an RING-type zinc finger. Lysine 160 participates in a covalent cross-link: Glycyl lysine isopeptide (Lys-Gly) (interchain with G-Cter in SUMO2). Phosphoserine is present on serine 196. Lysine 251 is covalently cross-linked (Glycyl lysine isopeptide (Lys-Gly) (interchain with G-Cter in SUMO2)). 2 disordered regions span residues 414–477 (QAPW…SSSD) and 496–692 (VELS…RYYL). Residues 434 to 444 (VGVSSLLNSSD) are compositionally biased toward low complexity. The interval 438–574 (SLLNSSDSSD…RSTSLPAPRD (137 aa)) is sumoylation and localization to discrete nuclear foci. The segment at 438–654 (SLLNSSDSSD…RSRTRDSSWS (217 aa)) is interaction with SUMO1. The span at 455–464 (TTSQIQGVQT) shows a compositional bias: polar residues. Positions 457–731 (SQIQGVQTND…RRTLSRAHYS (275 aa)) are interaction with p53/TP53. The segment at 457–879 (SQIQGVQTND…GKATDTSKHH (423 aa)) is interaction with TOP1. Low complexity predominate over residues 465-477 (NDDVNNDSDSSSD). Residue serine 500 is modified to Phosphoserine. Residues 507–518 (PYEKVETVKTQE) are compositionally biased toward basic and acidic residues. Residues 522-535 (SYSSGDSDVSRASS) show a composition bias toward low complexity. Residues 540–566 (LGKDEQMSKSHCDSDTRISSKKEEKRS) are compositionally biased toward basic and acidic residues. Lysine 561 is covalently cross-linked (Glycyl lysine isopeptide (Lys-Gly) (interchain with G-Cter in SUMO)). Serine 585 is subject to Phosphoserine. Composition is skewed to basic residues over residues 613–629 (RNHRKHGKKRLRNKRSR) and 637–647 (PRARKDKKRSR). The segment covering 654–669 (SRRSQTLSLSSGSTSR) has biased composition (low complexity). Lysine 701 participates in a covalent cross-link: Glycyl lysine isopeptide (Lys-Gly) (interchain with G-Cter in SUMO2). 2 disordered regions span residues 713–934 (RDGY…PIQD) and 970–1033 (TVEN…CDVS). Position 718 is a phosphoserine; by PLK1 (serine 718). The segment covering 721-730 (RRRTLSRAHY) has biased composition (basic residues). The span at 731–747 (SRQSSSPEFRIQSFSER) shows a compositional bias: polar residues. The residue at position 734 (serine 734) is a Phosphoserine. The span at 770–780 (SVSSNRSRTTS) shows a compositional bias: low complexity. A compositionally biased stretch (basic and acidic residues) spans 815–837 (FTSKGKDSHYQKSKLDGSYKNES). Residues lysine 818 and lysine 834 each participate in a glycyl lysine isopeptide (Lys-Gly) (interchain with G-Cter in SUMO2) cross-link. Basic residues predominate over residues 851-860 (KHKRRRRRTR). Positions 851 to 914 (KHKRRRRRTR…ITIDSDSDGE (64 aa)) are interaction with UBE2I. A phosphoserine mark is found at serine 861 and serine 863. Positions 877 to 894 (KHHKKKKKKHKKKHKKHH) are enriched in basic residues. Serine 909, serine 911, serine 999, serine 1016, and serine 1025 each carry phosphoserine. Over residues 992–1008 (TFASDLESQSSNVSIQA) the composition is skewed to polar residues.

As to quaternary structure, interacts with TOP1. Interacts with the SUMO1 conjugating enzyme UBE2I. Interacts with SUMO1. Interacts with NKX3-1; polyubiquitinates NKX3-1 and induces its proteasomal degradation. Interacts with SIN3A; sumoylates SIN3A. Interacts with IKBKE; induced by DNA damage. Interacts with p53/TP53. Interacts with PARK7/DJ-1. Post-translationally, phosphorylation at Ser-99 regulates the E3 ubiquitin-protein ligase activity but not the SUMO1-protein ligase activity. Phosphorylation at Ser-718 increases the E3 ubiquitin-protein ligase activity versus the E3 SUMO1-protein ligase activity resulting in increased p53/TP53 ubiquitination and degradation. Sumoylated.

It is found in the nucleus. Its subcellular location is the PML body. The catalysed reaction is S-ubiquitinyl-[E2 ubiquitin-conjugating enzyme]-L-cysteine + [acceptor protein]-L-lysine = [E2 ubiquitin-conjugating enzyme]-L-cysteine + N(6)-ubiquitinyl-[acceptor protein]-L-lysine.. Functions as an E3 ubiquitin-protein ligase and as a E3 SUMO1-protein ligase. Probable tumor suppressor involved in cell growth, cell proliferation and apoptosis that regulates p53/TP53 stability through ubiquitin-dependent degradation. May regulate chromatin modification through sumoylation of several chromatin modification-associated proteins. May be involved in DNA-damage-induced cell death through IKBKE sumoylation. The protein is E3 ubiquitin-protein ligase Topors (Topors) of Mus musculus (Mouse).